A 167-amino-acid polypeptide reads, in one-letter code: U-scoloptoxin(08)-Er5b (167 aa).

Positions 1–22 are cleaved as a signal peptide; that stretch reads MKTNCEFPLLCLLIVLVANVEG. Positions 23-94 are excised as a propeptide; that stretch reads EVEDTGLKMV…KRLWRNWERR (72 aa). RLWRNWE repeat units follow at residues 34–40, 61–67, and 86–92; these read RLWRNWE. Position 95 is a pyrrolidone carboxylic acid (glutamine 95). An RLWRNWE 4; approximate repeat occupies 107–113; the sequence is ELWRNWE. A propeptide spanning residues 112 to 118 is cleaved from the precursor; it reads WEDLKRR. Glutamine 119 is modified (pyrrolidone carboxylic acid). An RLWRNWE 5 repeat occupies 134 to 140; it reads RLWRNWE. A propeptide spanning residues 139 to 167 is cleaved from the precursor; sequence WEDNHATLRKRSADSLSRQKRLGKERGKE. Residues 147-167 form a disordered region; sequence RKRSADSLSRQKRLGKERGKE.

This sequence belongs to the scoloptoxin-08 family. In terms of tissue distribution, expressed by the venom gland.

Its subcellular location is the secreted. The chain is U-scoloptoxin(08)-Er5b from Ethmostigmus rubripes (Giant centipede).